Here is a 2393-residue protein sequence, read N- to C-terminus: Leucine-rich repeat serine/threonine-protein kinase 1 (2393 aa).

10 ANK repeats span residues 56–86 (HGRTPLMLAAHNGKLDSLRTILMLSPNSLNL), 90–120 (RGKTALHMAAESGETSIVLELVELGSDPMKS), 123–152 (EGHCALELAQMAGHNEVAAKLIDAIQKESE), 197–226 (EDETALLIACTNGHIEIVRHLLQFEEHLLQ), 230–259 (SKDTVIHAAVSSQNVEVLQLCLEKFPQLVK), 264–293 (EGSTCLHWAARCGSSECVSTILNFPFPSEF), 317–347 (ECRTAMYLAVAEGHLEVVKAMTDFKCTSIDG), 361–390 (RGRTPFMLAAFNQNLPLMTLLLDAGADVNL), 407–437 (IGSGALVEAVRSDGLHIVHFLLDRGALDTDN), and 439–464 (ALRLAAQGKNEKLIRVFLVRLVFADP). 5 LRR repeats span residues 532–553 (AITRVDLSDNRLNTFPSILFQM), 555–576 (SLRSLNLADNSIRKIEIPTYYI), 580–600 (SLEILNLRNNQLECIAIQFLS), 604–625 (QLQQLDVSKNELSQLPEYIWLC), and 627–648 (ALKELNASYNRLSTLPMVARAS). The interval 649–675 (RGERPRLNNSNNNFNTQSPTQESNPIV) is disordered. LRR repeat units follow at residues 718-739 (TLTTINLSFNKFHTFPFCLACT), 742-763 (RLLILNMSNNSMTSLPPMACVP), and 765-787 (HLRTLDLSYNKIQESFIEASPLH). The interval 797-844 (TSNGSMLPKRRNSPARQHRSRSKSAVRSQRSLSVSRHHALIDPQKEEE) is disordered. Over residues 804 to 820 (PKRRNSPARQHRSRSKS) the composition is skewed to basic residues. Residues 821–830 (AVRSQRSLSV) are compositionally biased toward polar residues. The segment covering 835-844 (ALIDPQKEEE) has biased composition (basic and acidic residues). LRR repeat units follow at residues 856 to 877 (WLKTLQLAGNRLRSISVTNAAS), 883 to 905 (ALNVMDISDNKLLQAPPDVARLT), 906 to 928 (LLSMLNLSGNTAIKELPPDYGML), and 930 to 952 (RLWSLSLKGCSLKEPLESMVNVE). Residues 969-1167 (ESKTYHHLRL…NTIYRTAWEV (199 aa)) form the Roc domain. Residues 982 to 989 (GSDGVGKS), 1040 to 1044 (DFGGQ), and 1098 to 1101 (TNLD) contribute to the GTP site. The region spanning 1233 to 1422 (FYAACTFLHD…GFWSRLVTRI (190 aa)) is the COR domain. Disordered regions lie at residues 1361 to 1382 (CPSPAGSPTKSPLRRTSPTDQN) and 1596 to 1633 (RNGSRSRTSSSASHRRSQDDGELPITSSSHMKGSRTTG). Polar residues-rich tracts occupy residues 1366 to 1382 (GSPTKSPLRRTSPTDQN) and 1620 to 1633 (ITSSSHMKGSRTTG). The Protein kinase domain occupies 1694-1992 (LKRSRMLGRG…LVGFCAAPEF (299 aa)). ATP-binding positions include 1700 to 1708 (LGRGAFGFV) and Lys1726. Catalysis depends on Asp1847, which acts as the Proton acceptor.

This sequence belongs to the protein kinase superfamily. TKL Ser/Thr protein kinase family. ROCO subfamily. Mg(2+) is required as a cofactor. Requires Mn(2+) as cofactor. As to expression, expressed in cell bodies, but not in dendritic or axonal processes, of adult head neurons. Also present in non-neuronal tissues, such as the body wall musculature and the epithelial cells of the nematode vulva.

Its subcellular location is the golgi apparatus. The enzyme catalyses L-seryl-[protein] + ATP = O-phospho-L-seryl-[protein] + ADP + H(+). It catalyses the reaction L-threonyl-[protein] + ATP = O-phospho-L-threonyl-[protein] + ADP + H(+). Determines polarized sorting of synaptic vesicle (SV) proteins to the axons by excluding SV proteins from the dendrite-specific transport machinery in the Golgi. Role in stress response. Appears to antagonize the effects of pink-1 both in the regulation of axon guidance and stress response. This chain is Leucine-rich repeat serine/threonine-protein kinase 1 (lrk-1), found in Caenorhabditis elegans.